The sequence spans 409 residues: NADH-quinone oxidoreductase subunit D (409 aa).

This sequence belongs to the complex I 49 kDa subunit family. NDH-1 is composed of 14 different subunits. Subunits NuoB, C, D, E, F, and G constitute the peripheral sector of the complex.

Its subcellular location is the cell inner membrane. It carries out the reaction a quinone + NADH + 5 H(+)(in) = a quinol + NAD(+) + 4 H(+)(out). In terms of biological role, NDH-1 shuttles electrons from NADH, via FMN and iron-sulfur (Fe-S) centers, to quinones in the respiratory chain. The immediate electron acceptor for the enzyme in this species is believed to be ubiquinone. Couples the redox reaction to proton translocation (for every two electrons transferred, four hydrogen ions are translocated across the cytoplasmic membrane), and thus conserves the redox energy in a proton gradient. The polypeptide is NADH-quinone oxidoreductase subunit D (Sulfurovum sp. (strain NBC37-1)).